The primary structure comprises 654 residues: Neuroendocrine convertase 2 (654 aa).

The signal sequence occupies residues 1–21; the sequence is MAAATWSWLLAPFLLLHWASA. Positions 22–121 are excised as a propeptide; the sequence is GAGGGAGGSG…VQQPGFKRVK (100 aa). One can recognise a Peptidase S8 domain in the interval 158–483; sequence QWYLKNTGQN…FGVLDAGAMV (326 aa). N-linked (GlcNAc...) asparagine glycosylation occurs at Asn189. Catalysis depends on charge relay system residues Asp196 and His237. Cystine bridges form between Cys254–Cys404 and Cys346–Cys376. A glycan (N-linked (GlcNAc...) asparagine) is linked at Asn312. The Charge relay system role is filled by Ser412. The P/Homo B domain occupies 491–627; it reads SVPPRYHCEA…SLVLHGTKEA (137 aa). A disulfide bond links Cys498 and Cys524. The N-linked (GlcNAc...) asparagine glycan is linked to Asn544.

It belongs to the peptidase S8 family. Furin subfamily. Expressed in the central nervous system (CNS) and midgut endocrine cells of third instar larva (at protein level). In the CNS, expressed in the CA-LP1 and CA-LP2 neurons which innervate the corpus allatum, and in the CC-MS2 neurons which innervate the corpora cardiaca of the ring gland. Also expressed in the CC-MS1, SP3, Tv and Va neurons. Expressed in Akh-producing cells of the corpora cardiaca. In the embryo, restricted to the final stages of embryogenesis where expression is found in anterior sensory structures and in only 168 cells in the brain and ventral nerve cord. After larvae hatch, the sensory structures and most cells in the CNS turn off or substantially reduce expression. In third instar larva, expressed at higher levels in the anterior section than in the posterior section. Little expression is detected in the adult head. In the developing eye, expressed at higher levels in pale-type R7 photoreceptor cells than in yellow-type R7 cells although expression is not seen in all pale-type R7 cells. Also expressed in outer photoreceptor cells.

The protein resides in the secreted. It catalyses the reaction Release of protein hormones and neuropeptides from their precursors, generally by hydrolysis of -Lys-Arg-|- bonds.. Serine endopeptidase which is involved in the processing of hormone and other protein precursors at sites comprised of pairs of basic amino acid residues. Required during embryonic and larval development, probably by proteolytically processing peptide hormones involved in hatching, larval growth and larval molting. Required for the processing and activation of Akh which maintains normal hemolymph sugar levels. Has been shown in one study to be required for processing of sli into slit N-product and slit C-product in the embryo which is necessary for lateral transverse muscle elongation but has been shown in another study not to be required for sli cleavage. Required for larval hatching. Also required for normal larval wandering behavior which occurs prior to pupariation. Required during pupal development for head eversion, leg and wing disk extension, and abdominal differentiation. Required during eye development for R8 photoreceptor cell specification by regulating processing of ligands required for the BMP and activin signaling pathways. The sequence is that of Neuroendocrine convertase 2 from Drosophila melanogaster (Fruit fly).